A 647-amino-acid polypeptide reads, in one-letter code: Chaperone protein DnaK (647 aa).

Phosphothreonine; by autocatalysis is present on Thr-199. The tract at residues 602–647 (MYAQEQAQAGQQAGPGAGSASAGQSGEKPVEGEVVDAEFEEVKDKK) is disordered. Low complexity predominate over residues 604–627 (AQEQAQAGQQAGPGAGSASAGQSG).

It belongs to the heat shock protein 70 family.

In terms of biological role, acts as a chaperone. In Nitrosomonas eutropha (strain DSM 101675 / C91 / Nm57), this protein is Chaperone protein DnaK.